We begin with the raw amino-acid sequence, 411 residues long: Serine/threonine-protein kinase 54 (411 aa).

Residues Ser-43 and Ser-45 each carry the phosphoserine; by PHOT1 modification. In terms of domain architecture, Protein kinase spans 108 to 385 (LIIKSVIARG…EEVVAMLEAI (278 aa)). ATP-binding positions include 114–122 (IARGTFGTV) and Lys-135. Asp-253 functions as the Proton acceptor in the catalytic mechanism. Thr-286 bears the Phosphothreonine mark.

It belongs to the protein kinase superfamily. Ser/Thr protein kinase family. In terms of assembly, binds to CBC2. Associates with PHOT2, BLUS1 and PM H(+)-ATPase (e.g. AHA1). Autophosphorylated. Phosphorylated in guard cells by HT1 in response to low CO(2) concentrations and by PHOT1 after blue light (BL) exposure. In terms of tissue distribution, expressed in guard cells.

It is found in the cytoplasm. It localises to the cytosol. It carries out the reaction L-seryl-[protein] + ATP = O-phospho-L-seryl-[protein] + ADP + H(+). The catalysed reaction is L-threonyl-[protein] + ATP = O-phospho-L-threonyl-[protein] + ADP + H(+). Serine/threonine protein kinase that phosphorylates proteins on serine and threonine residues. Collectively with CBC2, acts as a negative regulator of stomatal opening, probably via the inhibition of plasma membrane-type ATPases (AHA1 and AHA2) activity in guard cells, but in an abscisic acid (ABA)-independent manner. However, at low concentrations of CO(2), together with CBC2, stimulates stomatal opening via the inhibition of S-type anion channels in response to blue light (BL) and red light (RL), thus being a key component to maximize photosynthesis in the light under low CO(2) conditions. Required for temperature decrease in leaves. Downstream target of HIGH LEAF TEMPERATURE1 (HT1) during low CO(2)-induced stomatal opening. Also functions in the signaling pathways of phototropins. This chain is Serine/threonine-protein kinase 54, found in Arabidopsis thaliana (Mouse-ear cress).